A 213-amino-acid polypeptide reads, in one-letter code: Small ribosomal subunit protein uS3 (213 aa).

A KH type-2 domain is found at 38–106; the sequence is IREYLENRLS…RVHINIVEIK (69 aa).

The protein belongs to the universal ribosomal protein uS3 family. Part of the 30S ribosomal subunit. Forms a tight complex with proteins S10 and S14.

Functionally, binds the lower part of the 30S subunit head. Binds mRNA in the 70S ribosome, positioning it for translation. The chain is Small ribosomal subunit protein uS3 from Oceanobacillus iheyensis (strain DSM 14371 / CIP 107618 / JCM 11309 / KCTC 3954 / HTE831).